A 241-amino-acid chain; its full sequence is Probable transcriptional regulatory protein RSc2190 (241 aa).

It belongs to the TACO1 family.

The protein localises to the cytoplasm. The chain is Probable transcriptional regulatory protein RSc2190 from Ralstonia nicotianae (strain ATCC BAA-1114 / GMI1000) (Ralstonia solanacearum).